We begin with the raw amino-acid sequence, 617 residues long: Type VII secretion systems protein EssD (617 aa).

Residues 420–448 (QNHVTHGPKDSMVRSEGKHSISSHEMNSS) are disordered. Over residues 426-438 (GPKDSMVRSEGKH) the composition is skewed to basic and acidic residues.

It belongs to the EssD family. Interacts (via C-terminal) with EssG; this interaction blocks EssD activity. Interacts with EssE.

The protein resides in the secreted. The protein localises to the cell membrane. Functionally, component of the type VII secretion system (Ess). Plays a role in Ess secretion during infection. Required for the efficient secretion of EsxA. Required for abscess formation and staphylococcal persistence in host tissue. Possesses a toxic DNase activity that is modulated by EssG by forming a nuclease toxin-antitoxin pair. This nuclease toxin targets competitor bacteria. This Staphylococcus aureus (strain Newman) protein is Type VII secretion systems protein EssD.